The sequence spans 469 residues: Equisetin cluster transcription factor eqxR (469 aa).

The zn(2)-C6 fungal-type DNA-binding region spans 13 to 47 (CDRCRSHKLKCTVAPENSRSGSNRCTRCIRAQVTC). Residues 58–84 (STNVKKADIKSGTNSQETTSMQASTIV) form a disordered region. Polar residues predominate over residues 68-82 (SGTNSQETTSMQAST).

The protein resides in the nucleus. Its function is as follows. Transcription factor that regulates the expression of the gene cluster that mediates the biosynthesis of Equisetin. The polypeptide is Equisetin cluster transcription factor eqxR (Fusarium heterosporum).